A 496-amino-acid polypeptide reads, in one-letter code: Apolipoprotein N-acyltransferase (496 aa).

Helical transmembrane passes span 6–26 (IICLLLGILSGLVFAPIFFIP), 50–70 (FGYLFGFGHFLSGMYWISIGV), 77–97 (FWWAIPFALFGLPIILAFFIS), 114–134 (LIFCLLWVLFEWIRSWILTGL), 148–168 (ILIQPLSITGIYGLSFIVIYI), and 183–203 (LKILLASSMLILTVMVIYGAV). Residues 220-464 (VQPSIPQTAK…QGLIPQKLTT (245 aa)) enclose the CN hydrolase domain. Glu-259 functions as the Proton acceptor in the catalytic mechanism. Lys-322 is a catalytic residue. The Nucleophile role is filled by Cys-372. The chain crosses the membrane as a helical span at residues 474-494 (FAMLLSIVFIILIHYLLSLIF).

The protein belongs to the CN hydrolase family. Apolipoprotein N-acyltransferase subfamily.

It is found in the cell inner membrane. It catalyses the reaction N-terminal S-1,2-diacyl-sn-glyceryl-L-cysteinyl-[lipoprotein] + a glycerophospholipid = N-acyl-S-1,2-diacyl-sn-glyceryl-L-cysteinyl-[lipoprotein] + a 2-acyl-sn-glycero-3-phospholipid + H(+). Its pathway is protein modification; lipoprotein biosynthesis (N-acyl transfer). Its function is as follows. Catalyzes the phospholipid dependent N-acylation of the N-terminal cysteine of apolipoprotein, the last step in lipoprotein maturation. In Rickettsia prowazekii (strain Madrid E), this protein is Apolipoprotein N-acyltransferase.